The chain runs to 458 residues: Flavonol 3-O-glucosyltransferase UGT76E12 (458 aa).

H25 serves as the catalytic Proton acceptor. Residue H25 participates in an anthocyanidin binding. The Charge relay role is filled by D118. UDP-alpha-D-glucose-binding residues include T140, A339, Q341, H356, W359, N360, S361, and E364. An anthocyanidin is bound at residue G379. D380 and Q381 together coordinate UDP-alpha-D-glucose.

Belongs to the UDP-glycosyltransferase family.

It carries out the reaction a flavonol + UDP-alpha-D-glucose = a flavonol 3-O-beta-D-glucoside + UDP + H(+). The enzyme catalyses a 7-O-hydroxy-flavonol + UDP-alpha-D-glucose = a flavonol 7-O-beta-D-glucoside + UDP + H(+). Functionally, possesses quercetin 3-O-glucosyltransferase and 7-O-glucosyltransferase activities in vitro. The chain is Flavonol 3-O-glucosyltransferase UGT76E12 from Arabidopsis thaliana (Mouse-ear cress).